The following is a 131-amino-acid chain: Small ribosomal subunit protein uS8 (131 aa).

The protein belongs to the universal ribosomal protein uS8 family. Part of the 30S ribosomal subunit. Contacts proteins S5 and S12.

One of the primary rRNA binding proteins, it binds directly to 16S rRNA central domain where it helps coordinate assembly of the platform of the 30S subunit. The chain is Small ribosomal subunit protein uS8 from Acholeplasma laidlawii (strain PG-8A).